Reading from the N-terminus, the 262-residue chain is Mediator of RNA polymerase II transcription subunit 8 (262 aa).

Residues 168 to 211 (LEEKEMGVKNVITGLKRQLDEGDEEDEEEEEEEEDMQGEEMEVV) are a coiled coil. Residues 183–206 (KRQLDEGDEEDEEEEEEEEDMQGE) form a disordered region. The segment covering 188 to 206 (EGDEEDEEEEEEEEDMQGE) has biased composition (acidic residues).

This sequence belongs to the Mediator complex subunit 8 family. Component of the Mediator complex.

The protein resides in the nucleus. In terms of biological role, component of the Mediator complex, a coactivator involved in the regulated transcription of nearly all RNA polymerase II-dependent genes. Mediator functions as a bridge to convey information from gene-specific regulatory proteins to the basal RNA polymerase II transcription machinery. Mediator is recruited to promoters by direct interactions with regulatory proteins and serves as a scaffold for the assembly of a functional preinitiation complex with RNA polymerase II and the general transcription factors. This Coccidioides immitis (strain RS) (Valley fever fungus) protein is Mediator of RNA polymerase II transcription subunit 8 (MED8).